The following is a 482-amino-acid chain: Glutamyl-tRNA(Gln) amidotransferase subunit A (482 aa).

Residues K75 and S150 each act as charge relay system in the active site. S174 (acyl-ester intermediate) is an active-site residue.

The protein belongs to the amidase family. GatA subfamily. Heterotrimer of A, B and C subunits.

The enzyme catalyses L-glutamyl-tRNA(Gln) + L-glutamine + ATP + H2O = L-glutaminyl-tRNA(Gln) + L-glutamate + ADP + phosphate + H(+). Functionally, allows the formation of correctly charged Gln-tRNA(Gln) through the transamidation of misacylated Glu-tRNA(Gln) in organisms which lack glutaminyl-tRNA synthetase. The reaction takes place in the presence of glutamine and ATP through an activated gamma-phospho-Glu-tRNA(Gln). This chain is Glutamyl-tRNA(Gln) amidotransferase subunit A, found in Cyanothece sp. (strain PCC 7425 / ATCC 29141).